The primary structure comprises 451 residues: MSEKVEKEIGEQITKLDLSEYRSIELSKLSKENIGQKIRTFGWVANVRSQSTITFIELYAHYRTVKCVYQKKMHLTMCTSMTVYGTVSKNFGKKDAHEFEIQVEGVEIYNGAIAPSFPLNEDSSVNAILTNGHLGLRTKKRQLFLKARGHLLKIIRDFYFEGEYTEVTPPTMVQTQVEGGSTLFKLDYYGEDAYLTQSSQLYLETVVPASHRAYCIMPSYRAEKSRTRRHLSEYTHVEAEMADIDLDGLISSIEALVSYSMRRFYEEMKSDILSVFPEFEFHKVPRTPFKRIKYSEAIELLKSKGYKKEDNTDFELGDDIPDAAERYLVEVVGDGCPVFLTHFLVGHKPFYMRKDENDKGLTESTDLLFPGIGEILGGSMRQDTYEDLIEGFRRENINIDPYYWYLDMARFGPCKHGGYGLGFERFLMGLMRYESVDEATLYPRKVSRCQP.

It belongs to the class-II aminoacyl-tRNA synthetase family.

It is found in the cytoplasm. It catalyses the reaction tRNA(Asn) + L-asparagine + ATP = L-asparaginyl-tRNA(Asn) + AMP + diphosphate + H(+). This is Probable asparagine--tRNA ligase, cytoplasmic from Encephalitozoon cuniculi (strain GB-M1) (Microsporidian parasite).